Consider the following 145-residue polypeptide: Transcription antitermination protein NusB (145 aa).

The protein belongs to the NusB family.

In terms of biological role, involved in transcription antitermination. Required for transcription of ribosomal RNA (rRNA) genes. Binds specifically to the boxA antiterminator sequence of the ribosomal RNA (rrn) operons. This chain is Transcription antitermination protein NusB, found in Citrifermentans bemidjiense (strain ATCC BAA-1014 / DSM 16622 / JCM 12645 / Bem) (Geobacter bemidjiensis).